The following is a 432-amino-acid chain: MNFDVAIIGGGLAGLTCGIALQQCGKRCVIINNGQAAIDFASGSLDLLSRMPSTTYGENRAVENLKENITALRNELPAHPYSLLGAEKVLAKAQDFERLANELNLDLIGSTEKNHWRVTGLGSLRGAWLSPNSVPTVQGNEPFPHKRIAVLGIEGYHDFQPQLLAANLVLNPQFEHCEVTSGFLNIPQLDELRKNAREFRSVNISQLLEHKLAFNDLVKEIIESAQGAEAVFLPACFGLENQEFMTALRDATKLALFELPTLPPSLLGMRQRIQLRHKFESLGGLMINGDSALNATFEGNKVRCINTRLLENEEITADNFVLASGSFFSKGLISEFDKIYEPVFESDIIGVEGFNQKDRFTWTVHRFAHPQPYQSAGVAINAQCQVQKCGQFLTNLYAVGNVIGGFNALELGCGSGVAVVTALAVADEILAK.

Belongs to the anaerobic G-3-P dehydrogenase subunit B family. In terms of assembly, composed of a catalytic GlpA/B dimer and of membrane bound GlpC. FMN is required as a cofactor.

The catalysed reaction is a quinone + sn-glycerol 3-phosphate = dihydroxyacetone phosphate + a quinol. It functions in the pathway polyol metabolism; glycerol degradation via glycerol kinase pathway; glycerone phosphate from sn-glycerol 3-phosphate (anaerobic route): step 1/1. Functionally, conversion of glycerol 3-phosphate to dihydroxyacetone. Uses fumarate or nitrate as electron acceptor. The chain is Anaerobic glycerol-3-phosphate dehydrogenase subunit B from Haemophilus influenzae (strain 86-028NP).